We begin with the raw amino-acid sequence, 544 residues long: MAKQIVFNEEARRALERGVNALAESVRVTLGPKGRNVVLDKKFGAPLITNDGVTIAREIELEDPFENMGAQLVKEVATKTNDVAGDGTTTATVLAQAIIREGLKNVAAGANPMGIKRGIEKAVESVVDDIKTNAKPIESKESIAQVASISAGDDNIGVLISDAMEKVGKDGVITVEEAKGMTTELKVVEGMQFDRGYLSAYMITDTDKMEAILNDPYILITDKKIGAIADILPVLEKVVQAGRQLLIIAEDIEGEALATLILNKLRGTFTCVAVKAPGFGDRRKAMLEDIAILTGGTVITEDLGLKLENTTIDMLGRARQIRVTKEETTIVEGSGSQDDIKSRVEAIKKQIDETTSDFDREKLQERLAKLAGGVAVIQVGAATEVEMKEKKLRIEDALAATRAAVEEGIVAGGGCALVDAAKALDSLKLTGDEKTGVAIVYRALEEPLRQIANNAGFEGSIVVEKVRNGGRGVGFNALTEAYEDMIAAGIVDPAKVTRSALQNAASIAAMLLTTECLVSDIPSKDNGAAAMAGMGGMGGMGGMM.

ATP contacts are provided by residues 29–32 (TLGP), 86–90 (DGTTT), glycine 413, 476–478 (NAL), and aspartate 492.

Belongs to the chaperonin (HSP60) family. In terms of assembly, forms a cylinder of 14 subunits composed of two heptameric rings stacked back-to-back. Interacts with the co-chaperonin GroES.

The protein resides in the cytoplasm. The catalysed reaction is ATP + H2O + a folded polypeptide = ADP + phosphate + an unfolded polypeptide.. Its function is as follows. Together with its co-chaperonin GroES, plays an essential role in assisting protein folding. The GroEL-GroES system forms a nano-cage that allows encapsulation of the non-native substrate proteins and provides a physical environment optimized to promote and accelerate protein folding. In Desulfitobacterium hafniense (strain Y51), this protein is Chaperonin GroEL.